A 354-amino-acid polypeptide reads, in one-letter code: Uroporphyrinogen decarboxylase (354 aa).

Substrate-binding positions include 27–31 (RQAGR), Asp77, Tyr154, Ser209, and His327.

The protein belongs to the uroporphyrinogen decarboxylase family. Homodimer.

The protein localises to the cytoplasm. It catalyses the reaction uroporphyrinogen III + 4 H(+) = coproporphyrinogen III + 4 CO2. It participates in porphyrin-containing compound metabolism; protoporphyrin-IX biosynthesis; coproporphyrinogen-III from 5-aminolevulinate: step 4/4. Catalyzes the decarboxylation of four acetate groups of uroporphyrinogen-III to yield coproporphyrinogen-III. This Shewanella halifaxensis (strain HAW-EB4) protein is Uroporphyrinogen decarboxylase.